The primary structure comprises 325 residues: Elongation factor P--(R)-beta-lysine ligase (325 aa).

76-78 (SPE) is a binding site for substrate. ATP is bound by residues 100–102 (RNE) and Asn109. Tyr118 serves as a coordination point for substrate. 244–245 (EL) provides a ligand contact to ATP. A substrate-binding site is contributed by Glu251. An ATP-binding site is contributed by Gly300.

The protein belongs to the class-II aminoacyl-tRNA synthetase family. EpmA subfamily. In terms of assembly, homodimer.

The enzyme catalyses D-beta-lysine + L-lysyl-[protein] + ATP = N(6)-((3R)-3,6-diaminohexanoyl)-L-lysyl-[protein] + AMP + diphosphate + H(+). Functionally, with EpmB is involved in the beta-lysylation step of the post-translational modification of translation elongation factor P (EF-P). Catalyzes the ATP-dependent activation of (R)-beta-lysine produced by EpmB, forming a lysyl-adenylate, from which the beta-lysyl moiety is then transferred to the epsilon-amino group of a conserved specific lysine residue in EF-P. The sequence is that of Elongation factor P--(R)-beta-lysine ligase from Pectobacterium carotovorum subsp. carotovorum (strain PC1).